The chain runs to 72 residues: Protein RALF-like 36 (72 aa).

An N-terminal signal peptide occupies residues 1-27; it reads MGISKKTVVQSFALIIIISIVMSTTEA. Disulfide bonds link Cys43/Cys51 and Cys63/Cys69.

The protein belongs to the plant rapid alkalinization factor (RALF) family.

Its subcellular location is the secreted. Functionally, cell signaling peptide that may regulate plant stress, growth, and development. Mediates a rapid alkalinization of extracellular space by mediating a transient increase in the cytoplasmic Ca(2+) concentration leading to a calcium-dependent signaling events through a cell surface receptor and a concomitant activation of some intracellular mitogen-activated protein kinases. This chain is Protein RALF-like 36, found in Arabidopsis thaliana (Mouse-ear cress).